The following is a 155-amino-acid chain: RxLR effector protein 24 (155 aa).

Residues 1–21 (MRLLIWVLFVTLVTFVSNTTA) form the signal peptide. The short motif at 52 to 78 (RFLRTESKNDLKSDADTNGIDIEDEER) is the RxLR-dEER element. Residues 105–155 (EKAFQRMNQKGETPTTLAKRLDIGKTAEKRFEKTYEKYTAWWINHHTNAGT) form an RABA-binding domain region.

It belongs to the RxLR effector family. As to quaternary structure, interacts with Arabidopsis thaliana RABA GTPases including RABA1a, RABA1b, RABA1c, RABA1d, RABA1f, RABA2a, RABA2c, RABA2d, RABA4a, RABA4b and RABA4c.

It localises to the secreted. The protein resides in the host cell membrane. It is found in the host endomembrane system. Effector protein that contributes to pathogen virulence. Targets members of the RABA GTPases subfamily to inhibit vesicular secretion, leading to an accumulation of secretory proteins in the endoplasmic reticulum. The chain is RxLR effector protein 24 from Phytophthora brassicae.